The sequence spans 615 residues: Delta-like protein B (615 aa).

A signal peptide spans 1 to 20 (MAHLSLYCLLSVSLLQLVAS). Over 21–522 (SGVFELKVHS…VGQTSPSAVA (502 aa)) the chain is Extracellular. The region spanning 159 to 203 (VFCDEFYFGEACSDYCRPRDDTLGHYTCDENGNKECLVGWQGDYC) is the DSL domain. Disulfide bonds link C161–C170, C174–C186, C194–C203, C208–C219, C212–C225, C227–C236, C245–C250, C258–C267, C274–C286, C280–C296, C298–C307, C314–C325, C319–C334, C336–C345, C352–C363, C357–C373, C375–C384, C391–C402, C396–C411, C413–C422, C429–C440, C434–C449, C451–C460, C467–C478, C472–C487, and C489–C498. 3 consecutive EGF-like domains span residues 204 to 237 (SDPI…PSCS), 241 to 268 (HYPG…LFCN), and 270 to 308 (DLNY…TNCE). The EGF-like 4; calcium-binding domain occupies 310–346 (EINECDCNPCKNGGSCNDLENDYSCTCPQGFYGKNCE). EGF-like domains are found at residues 348–385 (IAMT…SNCE) and 387–423 (RLDR…SRCE). Positions 425-461 (NIDDCARYPCQNAGTCQDGINDYTCTCTLGFTGKNCS) constitute an EGF-like 7; calcium-binding domain. N-linked (GlcNAc...) asparagine glycosylation occurs at N459. In terms of domain architecture, EGF-like 8 spans 463 to 499 (RADACLTNPCLHGGTCFTHFSGPVCQCVPGFMGSTCE). A helical transmembrane segment spans residues 523–543 (VSCVLGVLAVFLGVCVGLVVL). Topologically, residues 544–615 (RRRRHRLRRQ…FLWSAGGGLR (72 aa)) are cytoplasmic.

Post-translationally, ubiquitinated by mib, leading to its endocytosis and subsequent degradation.

The protein resides in the membrane. Functionally, acts as a ligand for Notch receptors and is involved in primary neurogenesis. Can activate Notch receptors, thereby playing a key role in lateral inhibition, a process that prevents the immediate neighbors of each nascent neural cell from simultaneously embarking on neural differentiation. This is Delta-like protein B (dlb) from Danio rerio (Zebrafish).